The chain runs to 319 residues: MamJ paralog LimJ (319 aa).

2 disordered regions span residues 1–59 (MMME…PAPV) and 145–176 (AAAP…TETE). Positions 30-52 (AALAPAADAEIPASSAPEPAAPI) are enriched in low complexity. The segment covering 150 to 164 (PEPEPVPEPEPEPEP) has biased composition (acidic residues).

This sequence belongs to the magnetosome MamJ protein family.

It localises to the magnetosome. Its function is as follows. Regulates the dynamic behavior of MamK filaments; paralog MamJ also promotes MamK turnover. At least one other protein besides MamJ and LimJ is required for MamK turnover. Might connect magnetosomes to MamK filaments. This chain is MamJ paralog LimJ, found in Paramagnetospirillum magneticum (strain ATCC 700264 / AMB-1) (Magnetospirillum magneticum).